The sequence spans 464 residues: 3-isopropylmalate dehydratase large subunit (464 aa).

[4Fe-4S] cluster is bound by residues Cys337, Cys397, and Cys400.

The protein belongs to the aconitase/IPM isomerase family. LeuC type 1 subfamily. In terms of assembly, heterodimer of LeuC and LeuD. [4Fe-4S] cluster is required as a cofactor.

The catalysed reaction is (2R,3S)-3-isopropylmalate = (2S)-2-isopropylmalate. The protein operates within amino-acid biosynthesis; L-leucine biosynthesis; L-leucine from 3-methyl-2-oxobutanoate: step 2/4. Functionally, catalyzes the isomerization between 2-isopropylmalate and 3-isopropylmalate, via the formation of 2-isopropylmaleate. This chain is 3-isopropylmalate dehydratase large subunit, found in Bacillus cereus (strain ATCC 10987 / NRS 248).